We begin with the raw amino-acid sequence, 62 residues long: Sec-independent protein translocase protein TatAc (62 aa).

A helical transmembrane segment spans residues 8–28; sequence ILVILFVGFLVFGPDKLPALG.

This sequence belongs to the TatA/E family. As to quaternary structure, forms a complex with TatC.

The protein localises to the cell membrane. Its function is as follows. Part of the twin-arginine translocation (Tat) system that transports large folded proteins containing a characteristic twin-arginine motif in their signal peptide across membranes. TatA could form the protein-conducting channel of the Tat system. In Bacillus subtilis (strain 168), this protein is Sec-independent protein translocase protein TatAc.